Reading from the N-terminus, the 94-residue chain is MVKLRLKRCGRKQRAIYRIVAIDVRSRREGRDLQKVGFYDPIKNQTYSNVPAILYFLEKGAQPTETVYDILRKTEFFKEFRISFDKKRKEKQES.

The protein belongs to the bacterial ribosomal protein bS16 family.

It is found in the plastid. The protein localises to the chloroplast. This Phalaenopsis aphrodite subsp. formosana (Moth orchid) protein is Small ribosomal subunit protein bS16c.